The following is a 209-amino-acid chain: Uracil phosphoribosyltransferase (209 aa).

Residues R79, R104, and 131-139 (DPMLATGGS) each bind 5-phospho-alpha-D-ribose 1-diphosphate. Uracil-binding positions include I194 and 199-201 (GDA). D200 is a binding site for 5-phospho-alpha-D-ribose 1-diphosphate.

This sequence belongs to the UPRTase family. Mg(2+) is required as a cofactor.

It carries out the reaction UMP + diphosphate = 5-phospho-alpha-D-ribose 1-diphosphate + uracil. The protein operates within pyrimidine metabolism; UMP biosynthesis via salvage pathway; UMP from uracil: step 1/1. Allosterically activated by GTP. Catalyzes the conversion of uracil and 5-phospho-alpha-D-ribose 1-diphosphate (PRPP) to UMP and diphosphate. In Geobacillus kaustophilus (strain HTA426), this protein is Uracil phosphoribosyltransferase.